Consider the following 211-residue polypeptide: Outer-membrane lipoprotein carrier protein (211 aa).

Residues 1–24 (MRNRILVSACAALAMFAMQAPAHA) form the signal peptide.

This sequence belongs to the LolA family. In terms of assembly, monomer.

Its subcellular location is the periplasm. In terms of biological role, participates in the translocation of lipoproteins from the inner membrane to the outer membrane. Only forms a complex with a lipoprotein if the residue after the N-terminal Cys is not an aspartate (The Asp acts as a targeting signal to indicate that the lipoprotein should stay in the inner membrane). In Cupriavidus taiwanensis (strain DSM 17343 / BCRC 17206 / CCUG 44338 / CIP 107171 / LMG 19424 / R1) (Ralstonia taiwanensis (strain LMG 19424)), this protein is Outer-membrane lipoprotein carrier protein.